The sequence spans 397 residues: Elongation factor Tu (397 aa).

Residues 10-207 (LPHVNVGTIG…TLDSYIPEPV (198 aa)) form the tr-type G domain. The interval 19 to 26 (GHVDHGKT) is G1. 19–26 (GHVDHGKT) is a GTP binding site. Thr-26 is a Mg(2+) binding site. The tract at residues 60–64 (GITIN) is G2. Positions 81 to 84 (DCPG) are G3. GTP contacts are provided by residues 81–85 (DCPGH) and 136–139 (NKAD). Residues 136-139 (NKAD) are G4. Residues 174-176 (SAR) are G5.

The protein belongs to the TRAFAC class translation factor GTPase superfamily. Classic translation factor GTPase family. EF-Tu/EF-1A subfamily. Monomer.

It localises to the cytoplasm. It carries out the reaction GTP + H2O = GDP + phosphate + H(+). Its function is as follows. GTP hydrolase that promotes the GTP-dependent binding of aminoacyl-tRNA to the A-site of ribosomes during protein biosynthesis. This is Elongation factor Tu from Pseudomonas putida (strain ATCC 700007 / DSM 6899 / JCM 31910 / BCRC 17059 / LMG 24140 / F1).